The chain runs to 119 residues: Multi-drug resistance efflux pump PmrA homolog (119 aa).

4 helical membrane-spanning segments follow: residues 1 to 20 (ILIGLVFTFVIYLPMAFVQS), 22 to 42 (LQLGILRFLLGFGAGALMPSV), 64 to 84 (MCSNLGMVTGPLVGSAIAGYI), and 88 to 108 (AAIVGTSLFVIVNIIWSFINF).

This sequence belongs to the major facilitator superfamily.

The protein resides in the cell membrane. This Lactococcus lactis subsp. cremoris (Streptococcus cremoris) protein is Multi-drug resistance efflux pump PmrA homolog (pmrA).